A 452-amino-acid polypeptide reads, in one-letter code: Phosphoglucosamine mutase (452 aa).

The active-site Phosphoserine intermediate is the Ser-108. Residues Ser-108, Asp-247, Asp-249, and Asp-251 each contribute to the Mg(2+) site. Ser-108 bears the Phosphoserine mark.

The protein belongs to the phosphohexose mutase family. Mg(2+) serves as cofactor. In terms of processing, activated by phosphorylation.

The catalysed reaction is alpha-D-glucosamine 1-phosphate = D-glucosamine 6-phosphate. Catalyzes the conversion of glucosamine-6-phosphate to glucosamine-1-phosphate. The polypeptide is Phosphoglucosamine mutase (Burkholderia pseudomallei (strain 668)).